The sequence spans 184 residues: NADH-quinone oxidoreductase subunit B (184 aa).

4 residues coordinate [4Fe-4S] cluster: cysteine 37, cysteine 38, cysteine 103, and cysteine 132.

This sequence belongs to the complex I 20 kDa subunit family. In terms of assembly, NDH-1 is composed of 14 different subunits. Subunits NuoB, C, D, E, F, and G constitute the peripheral sector of the complex. It depends on [4Fe-4S] cluster as a cofactor.

Its subcellular location is the cell membrane. It carries out the reaction a quinone + NADH + 5 H(+)(in) = a quinol + NAD(+) + 4 H(+)(out). In terms of biological role, NDH-1 shuttles electrons from NADH, via FMN and iron-sulfur (Fe-S) centers, to quinones in the respiratory chain. The immediate electron acceptor for the enzyme in this species is believed to be a menaquinone. Couples the redox reaction to proton translocation (for every two electrons transferred, four hydrogen ions are translocated across the cytoplasmic membrane), and thus conserves the redox energy in a proton gradient. The polypeptide is NADH-quinone oxidoreductase subunit B (Nocardia farcinica (strain IFM 10152)).